Reading from the N-terminus, the 100-residue chain is Nucleoid-associated protein Cagg_3200 (100 aa).

Belongs to the YbaB/EbfC family. As to quaternary structure, homodimer.

It localises to the cytoplasm. It is found in the nucleoid. In terms of biological role, binds to DNA and alters its conformation. May be involved in regulation of gene expression, nucleoid organization and DNA protection. This is Nucleoid-associated protein Cagg_3200 from Chloroflexus aggregans (strain MD-66 / DSM 9485).